The following is a 607-amino-acid chain: Type 3 secretion system secretin (607 aa).

Residues 1 to 33 (MAPACTTAHRRRAPLAAVLMLSLLPLLSPHADA) form the signal peptide. Positions 277 to 332 (ASSSDRVPVSPPLPGSGAAAAAGSPASVWPELSKGRRDESNPIDAGGGAELASDAP) are disordered. Low complexity predominate over residues 291–306 (GSGAAAAAGSPASVWP).

This sequence belongs to the bacterial secretin family. T3SS SctC subfamily. In terms of assembly, the core secretion machinery of the T3SS is composed of approximately 20 different proteins, including cytoplasmic components, a base, an export apparatus and a needle. This subunit is part of the base, which anchors the injectisome in the bacterial cell envelope. Forms a stable homooligomeric complex.

It localises to the cell outer membrane. In terms of biological role, component of the type III secretion system (T3SS), also called injectisome, which is used to inject bacterial effector proteins into eukaryotic host cells. Forms a ring-shaped multimeric structure with an apparent central pore in the outer membrane. Necessary for both basic pathogenicity and the induction of the hypersensitive response in resistant plants. The protein is Type 3 secretion system secretin of Xanthomonas euvesicatoria.